We begin with the raw amino-acid sequence, 597 residues long: Elongation factor 4 (597 aa).

A tr-type G domain is found at 4–181; that stretch reads SKIRNFSIIA…EIVDKISYPI (178 aa). GTP contacts are provided by residues 16–21 and 128–131; these read DHGKST and NKID.

It belongs to the TRAFAC class translation factor GTPase superfamily. Classic translation factor GTPase family. LepA subfamily.

The protein resides in the cell membrane. It carries out the reaction GTP + H2O = GDP + phosphate + H(+). In terms of biological role, required for accurate and efficient protein synthesis under certain stress conditions. May act as a fidelity factor of the translation reaction, by catalyzing a one-codon backward translocation of tRNAs on improperly translocated ribosomes. Back-translocation proceeds from a post-translocation (POST) complex to a pre-translocation (PRE) complex, thus giving elongation factor G a second chance to translocate the tRNAs correctly. Binds to ribosomes in a GTP-dependent manner. This is Elongation factor 4 from Mycoplasmopsis pulmonis (strain UAB CTIP) (Mycoplasma pulmonis).